Consider the following 351-residue polypeptide: Prostaglandin reductase 2 (351 aa).

Residue Phe99–Tyr100 coordinates substrate. NADP(+)-binding positions include Gly165–Gly168, Lys192, Tyr208, Asn231, Cys253–Tyr259, Phe287–Val289, and Asn337. Leu288–Leu290 is a substrate binding site.

The protein belongs to the NADP-dependent oxidoreductase L4BD family. In terms of assembly, monomer.

Its subcellular location is the cytoplasm. The catalysed reaction is 13,14-dihydro-15-oxo-prostaglandin E2 + NAD(+) = 15-oxoprostaglandin E2 + NADH + H(+). The enzyme catalyses 13,14-dihydro-15-oxo-prostaglandin E2 + NADP(+) = 15-oxoprostaglandin E2 + NADPH + H(+). It catalyses the reaction 13,14-dihydro-15-oxo-PGF2alpha + NADP(+) = 15-oxoprostaglandin F2alpha + NADPH + H(+). It carries out the reaction 13,14-dihydro-15-oxo-prostaglandin E1 + NADP(+) = 15-oxoprostaglandin E1 + NADPH + H(+). The catalysed reaction is 13,14-dihydro-15-oxo-prostaglandin F1alpha + NADP(+) = 15-oxoprostaglandin F1alpha + NADPH + H(+). In terms of biological role, functions as 15-oxo-prostaglandin 13-reductase and acts on 15-keto-PGE1, 15-keto-PGE2, 15-keto-PGE1-alpha and 15-keto-PGE2-alpha with highest activity towards 15-keto-PGE2. Overexpression represses transcriptional activity of PPARG and inhibits adipocyte differentiation. The sequence is that of Prostaglandin reductase 2 (PTGR2) from Pongo abelii (Sumatran orangutan).